We begin with the raw amino-acid sequence, 552 residues long: Arginine--tRNA ligase (552 aa).

The short motif at 124 to 134 (GNPTGPLHLAH) is the 'HIGH' region element.

The protein belongs to the class-I aminoacyl-tRNA synthetase family. As to quaternary structure, monomer.

It localises to the cytoplasm. It catalyses the reaction tRNA(Arg) + L-arginine + ATP = L-arginyl-tRNA(Arg) + AMP + diphosphate. The sequence is that of Arginine--tRNA ligase from Tropheryma whipplei (strain Twist) (Whipple's bacillus).